We begin with the raw amino-acid sequence, 522 residues long: Wax ester synthase/diacylglycerol acyltransferase 4 (522 aa).

Residues 1-12 (MEIETRPHISGD) show a composition bias toward basic and acidic residues. The tract at residues 1 to 20 (MEIETRPHISGDEKEEEQPL) is disordered. The Cytoplasmic segment spans residues 1–205 (MEIETRPHIS…SDSRLLWLVK (205 aa)). His149 functions as the Proton acceptor in the catalytic mechanism. A helical membrane pass occupies residues 206–226 (VIWTAVILGLNTVCDALEFIV). Topologically, residues 227 to 522 (TTLFVKDTET…QIAGLLYRML (296 aa)) are lumenal. Asn270 and Asn409 each carry an N-linked (GlcNAc...) asparagine glycan.

It in the N-terminal section; belongs to the long-chain O-acyltransferase family. Mostly expressed in roots, flowers and siliques.

It is found in the cell membrane. The protein resides in the endoplasmic reticulum membrane. It carries out the reaction an acyl-CoA + a 1,2-diacyl-sn-glycerol = a triacyl-sn-glycerol + CoA. It catalyses the reaction a long chain fatty alcohol + a fatty acyl-CoA = a wax ester + CoA. It participates in glycerolipid metabolism; triacylglycerol biosynthesis. It functions in the pathway lipid metabolism. In terms of biological role, bifunctional wax ester synthase/diacylglycerol acyltransferase. Involved in cuticular wax biosynthesis. This chain is Wax ester synthase/diacylglycerol acyltransferase 4, found in Arabidopsis thaliana (Mouse-ear cress).